We begin with the raw amino-acid sequence, 230 residues long: Cytidylate kinase (230 aa).

ATP is bound at residue 12-20 (GPSGAGKGT).

Belongs to the cytidylate kinase family. Type 1 subfamily.

The protein localises to the cytoplasm. It catalyses the reaction CMP + ATP = CDP + ADP. It carries out the reaction dCMP + ATP = dCDP + ADP. In Shewanella pealeana (strain ATCC 700345 / ANG-SQ1), this protein is Cytidylate kinase.